The sequence spans 421 residues: Ribulose bisphosphate carboxylase large chain (421 aa).

The substrate site is built by asparagine 68 and threonine 118. Catalysis depends on lysine 120, which acts as the Proton acceptor. Lysine 122 is a substrate binding site. Positions 146, 148, and 149 each coordinate Mg(2+). Position 146 is an N6-carboxylysine (lysine 146). Residue histidine 239 is the Proton acceptor of the active site. The substrate site is built by arginine 240, histidine 272, and serine 324.

This sequence belongs to the RuBisCO large chain family. Type I subfamily. In terms of assembly, heterohexadecamer of 8 large chains and 8 small chains; disulfide-linked. The disulfide link is formed within the large subunit homodimers. Mg(2+) is required as a cofactor. Post-translationally, the disulfide bond which can form in the large chain dimeric partners within the hexadecamer appears to be associated with oxidative stress and protein turnover.

It is found in the plastid. It localises to the chloroplast. It catalyses the reaction 2 (2R)-3-phosphoglycerate + 2 H(+) = D-ribulose 1,5-bisphosphate + CO2 + H2O. The enzyme catalyses D-ribulose 1,5-bisphosphate + O2 = 2-phosphoglycolate + (2R)-3-phosphoglycerate + 2 H(+). Its function is as follows. RuBisCO catalyzes two reactions: the carboxylation of D-ribulose 1,5-bisphosphate, the primary event in carbon dioxide fixation, as well as the oxidative fragmentation of the pentose substrate in the photorespiration process. Both reactions occur simultaneously and in competition at the same active site. The protein is Ribulose bisphosphate carboxylase large chain (rbcL) of Aegilops tauschii (Tausch's goatgrass).